The primary structure comprises 271 residues: Putative hydro-lyase Mrad2831_3350 (271 aa).

Belongs to the D-glutamate cyclase family.

The chain is Putative hydro-lyase Mrad2831_3350 from Methylobacterium radiotolerans (strain ATCC 27329 / DSM 1819 / JCM 2831 / NBRC 15690 / NCIMB 10815 / 0-1).